A 228-amino-acid polypeptide reads, in one-letter code: MAIIKYLGHSAFEIVLTGLDGAEKTILIDPWIENPLSPVKLSDYKNRKIDYIFVTHDHGDHLGNAIEIAKETGAKIVGIFEIALYAREKGVQSIDGNIGGKLNIPDLFAVLTPAWHSSNRGAPTGVVVGGKDVTIYHAGDTGLFMEMSLIGELYGPDIALLPIGGHYTMGVKEAVKAVQLIRPKIAIPMHYNTFTPIKADPEEFKKLVESTTPTKVVILKPGETFTYP.

This sequence belongs to the UPF0173 family.

The sequence is that of UPF0173 metal-dependent hydrolase Smar_0891 from Staphylothermus marinus (strain ATCC 43588 / DSM 3639 / JCM 9404 / F1).